The primary structure comprises 889 residues: Alanine--tRNA ligase (889 aa).

Residues H587, H591, C691, and H695 each coordinate Zn(2+). Disordered stretches follow at residues 734–760 (QQEQESKRKAEEAVAKEQLEKQREENK) and 866–889 (AQGGGKDTSKKDEAISKAKSMILG). The segment covering 872–881 (DTSKKDEAIS) has biased composition (basic and acidic residues).

The protein belongs to the class-II aminoacyl-tRNA synthetase family. Zn(2+) serves as cofactor.

It localises to the cytoplasm. It catalyses the reaction tRNA(Ala) + L-alanine + ATP = L-alanyl-tRNA(Ala) + AMP + diphosphate. Functionally, catalyzes the attachment of alanine to tRNA(Ala) in a two-step reaction: alanine is first activated by ATP to form Ala-AMP and then transferred to the acceptor end of tRNA(Ala). Also edits incorrectly charged Ser-tRNA(Ala) and Gly-tRNA(Ala) via its editing domain. In Nitrosopumilus maritimus (strain SCM1), this protein is Alanine--tRNA ligase.